A 100-amino-acid chain; its full sequence is Large ribosomal subunit protein bL21 (100 aa).

Belongs to the bacterial ribosomal protein bL21 family. As to quaternary structure, part of the 50S ribosomal subunit. Contacts protein L20.

In terms of biological role, this protein binds to 23S rRNA in the presence of protein L20. The protein is Large ribosomal subunit protein bL21 of Mycoplasmoides gallisepticum (strain R(low / passage 15 / clone 2)) (Mycoplasma gallisepticum).